A 244-amino-acid chain; its full sequence is Putative nucleosome assembly protein C36B7.08c (244 aa).

Residues Glu199 to Asn244 form a disordered region. Positions Met201–Lys232 are enriched in acidic residues. Phosphoserine is present on Ser211.

It belongs to the nucleosome assembly protein (NAP) family.

Its subcellular location is the nucleus. The chain is Putative nucleosome assembly protein C36B7.08c from Schizosaccharomyces pombe (strain 972 / ATCC 24843) (Fission yeast).